A 1029-amino-acid chain; its full sequence is Huntingtin-interacting protein 1 (1029 aa).

The 129-residue stretch at 32–160 folds into the ENTH domain; that stretch reads ERESFERTQT…EYHTKNPRFP (129 aa). S338 carries the post-translational modification Phosphoserine. The stretch at 375 to 636 forms a coiled coil; it reads HLIERLYREI…IQEALSQLEE (262 aa). Residues 410–491 are pDED; the sequence is SELEAELAEQ…HADLLRKNAE (82 aa). The I/LWEQ domain occupies 763–1004; sequence GLDIKQEELG…ELRKKHYELA (242 aa). An important for actin binding region spans residues 859-916; the sequence is RWTEGLISASKAVGWGATIMVDAADLVVQGKGKFEELMVCSREIAASTAQLVAASKVK. A disordered region spans residues 1009 to 1029; sequence GWEEGTEASPSTVQEAIPDKE.

Belongs to the SLA2 family. As to quaternary structure, homodimer. Binds actin. Binds HTT (via N-terminus). This interaction is restricted to the brain. Binds to IFT57. In normal conditions, it poorly interacts with IFT57, HIP1 being strongly associated with HTT. However, in mutant HTT proteins with a long poly-Gln region, interaction between HTT and HIP1 is inhibited, promoting the interaction between HIP1 and IFT57. Interacts with CLTB (via N-terminus). Interacts (via coiled coil domain) with AR. Interacts with AP2A1, AP2A2, CLTC and HIP1R. Interacts with GRIA1, GRIN2A and GRIN2B. Most abundantly expressed in brain. In brain, expressed in cortical tissue, hippocampus, the molecular layer of the cerebellum and olfactory bulb. Also expressed in spinal cord and bone marrow (at protein level). Expressed in reproductive tissues.

The protein localises to the cytoplasm. It localises to the nucleus. The protein resides in the endomembrane system. Its subcellular location is the cytoplasmic vesicle. It is found in the clathrin-coated vesicle membrane. Functionally, plays a role in clathrin-mediated endocytosis and trafficking. Involved in regulating AMPA receptor trafficking in the central nervous system in an NMDA-dependent manner. Regulates presynaptic nerve terminal activity. Enhances androgen receptor (AR)-mediated transcription. May act as a proapoptotic protein that induces cell death by acting through the intrinsic apoptosis pathway. Binds 3-phosphoinositides (via ENTH domain). May act through the ENTH domain to promote cell survival by stabilizing receptor tyrosine kinases following ligand-induced endocytosis. May play a functional role in the cell filament networks. May be required for differentiation, proliferation, and/or survival of somatic and germline progenitors. This Mus musculus (Mouse) protein is Huntingtin-interacting protein 1.